A 263-amino-acid chain; its full sequence is Meiotic drive suppressor wtf6 (263 aa).

The segment at 1-68 (MKNNYTSLKS…REKNPSRSTD (68 aa)) is disordered. Residues 19–30 (KTDHEIDLEKGP) show a composition bias toward basic and acidic residues. Helical transmembrane passes span 73–93 (FLIK…PAVC), 110–130 (WTLF…LTYF), and 201–221 (SASA…AETV).

It belongs to the WTF family. In terms of assembly, homomer. Interacts with other proteins that exhibit high sequence similarity.

The protein localises to the spore membrane. It localises to the vacuole membrane. Its function is as follows. Acts as a suppressor component of the dual wtf meiotic drive system, and can suppress but not confer meiotic drive by compatible poisons. Wtf meiotic drive systems promote unequal transmission of alleles from the parental zygote to progeny spores by encoding a poison and an antidote from the same locus; the poison is trans-acting and forms toxic aggregates in all spores within an ascus, wherease the antidote is spore-specific and targets aggregates for degradation by the vacuole. Meiotic drive by wtf systems therefore lead to poisoning of all progeny that do not inherit the dual poison/antidote allele, or express a compatible antidote. The protein is Meiotic drive suppressor wtf6 of Schizosaccharomyces kambucha (Fission yeast).